The chain runs to 121 residues: Ribosome-binding factor A (121 aa).

It belongs to the RbfA family. Monomer. Binds 30S ribosomal subunits, but not 50S ribosomal subunits or 70S ribosomes.

Its subcellular location is the cytoplasm. Functionally, one of several proteins that assist in the late maturation steps of the functional core of the 30S ribosomal subunit. Associates with free 30S ribosomal subunits (but not with 30S subunits that are part of 70S ribosomes or polysomes). Required for efficient processing of 16S rRNA. May interact with the 5'-terminal helix region of 16S rRNA. The chain is Ribosome-binding factor A from Paraburkholderia phytofirmans (strain DSM 17436 / LMG 22146 / PsJN) (Burkholderia phytofirmans).